Reading from the N-terminus, the 172-residue chain is Resuscitation-promoting factor RpfE (172 aa).

Positions 1-28 are cleaved as a signal peptide; the sequence is MKNARTTLIAAAIAGTLVTTSPAGIANA. Residues 33–89 are disordered; sequence LDPNAAAGPDAVGFDPNLPPAPDAAPVDTPPAPEDAGFDPNLPPPLAPDFLSPPAEE. The segment covering 49-65 has biased composition (pro residues); sequence NLPPAPDAAPVDTPPAP.

This sequence belongs to the transglycosylase family. Rpf subfamily. Interacts with RipA.

In terms of biological role, factor that stimulates resuscitation of dormant cells. Has peptidoglycan (PG) hydrolytic activity. Active in the pM concentration range. Has little to no effect on actively-growing cells. PG fragments could either directly activate the resuscitation pathway of dormant bacteria or serve as a substrate for endogenous Rpf, resulting in low molecular weight products with resuscitation activity. Its function is as follows. Stimulates growth of stationary phase M.bovis (a slow-growing Mycobacterium), reduces the lag phase of diluted fast-growers M.smegmatis and Micrococcus luteus. Sequential gene disruption indicates RpfB and RpfE are higher than RpfD and RpfC in functional hierarchy. This Mycobacterium tuberculosis (strain ATCC 25618 / H37Rv) protein is Resuscitation-promoting factor RpfE (rpfE).